A 291-amino-acid polypeptide reads, in one-letter code: Light-independent protochlorophyllide reductase iron-sulfur ATP-binding protein (291 aa).

ATP is bound by residues 10–15 and Lys-39; that span reads GIGKST. Ser-14 serves as a coordination point for Mg(2+). [4Fe-4S] cluster contacts are provided by Cys-95 and Cys-129. 180–181 is a binding site for ATP; it reads NR.

This sequence belongs to the NifH/BchL/ChlL family. In terms of assembly, homodimer. Protochlorophyllide reductase is composed of three subunits; ChlL, ChlN and ChlB. Requires [4Fe-4S] cluster as cofactor.

The protein localises to the plastid. Its subcellular location is the chloroplast. The enzyme catalyses chlorophyllide a + oxidized 2[4Fe-4S]-[ferredoxin] + 2 ADP + 2 phosphate = protochlorophyllide a + reduced 2[4Fe-4S]-[ferredoxin] + 2 ATP + 2 H2O. It functions in the pathway porphyrin-containing compound metabolism; chlorophyll biosynthesis (light-independent). Its function is as follows. Component of the dark-operative protochlorophyllide reductase (DPOR) that uses Mg-ATP and reduced ferredoxin to reduce ring D of protochlorophyllide (Pchlide) to form chlorophyllide a (Chlide). This reaction is light-independent. The L component serves as a unique electron donor to the NB-component of the complex, and binds Mg-ATP. The protein is Light-independent protochlorophyllide reductase iron-sulfur ATP-binding protein of Pinus contorta (Shore pine).